The chain runs to 355 residues: Phospho-N-acetylmuramoyl-pentapeptide-transferase (355 aa).

Helical transmembrane passes span 3–23 (GVLIAAMVALVVSLLGTPWVI), 56–76 (VIIVAALAGYFLAHLVTGIGF), 80–100 (GLLVLMVMTGLGLVGFLDDYI), 120–140 (AAVAIVFGLLAVRFKNDAGLL), 156–176 (VGIIAFPLLAWIIIAATSNAV), 185–205 (LAAGTSAMVFGAYVIISFWQF), 224–244 (PLDVALVAAAAMGACFGFLWW), 251–271 (IFMGDTGSLALGGAFASIAIV), 276–296 (LLLVVLGGLFVIETLSVMIQV), and 330–350 (FWIVSGLAVAFGLGLFYAEFL).

The protein belongs to the glycosyltransferase 4 family. MraY subfamily. Mg(2+) is required as a cofactor.

Its subcellular location is the cell membrane. It catalyses the reaction UDP-N-acetyl-alpha-D-muramoyl-L-alanyl-gamma-D-glutamyl-meso-2,6-diaminopimeloyl-D-alanyl-D-alanine + di-trans,octa-cis-undecaprenyl phosphate = di-trans,octa-cis-undecaprenyl diphospho-N-acetyl-alpha-D-muramoyl-L-alanyl-D-glutamyl-meso-2,6-diaminopimeloyl-D-alanyl-D-alanine + UMP. The protein operates within cell wall biogenesis; peptidoglycan biosynthesis. In terms of biological role, catalyzes the initial step of the lipid cycle reactions in the biosynthesis of the cell wall peptidoglycan: transfers peptidoglycan precursor phospho-MurNAc-pentapeptide from UDP-MurNAc-pentapeptide onto the lipid carrier undecaprenyl phosphate, yielding undecaprenyl-pyrophosphoryl-MurNAc-pentapeptide, known as lipid I. The polypeptide is Phospho-N-acetylmuramoyl-pentapeptide-transferase (Frankia casuarinae (strain DSM 45818 / CECT 9043 / HFP020203 / CcI3)).